Consider the following 123-residue polypeptide: Ribosome-binding factor A (123 aa).

Belongs to the RbfA family. As to quaternary structure, monomer. Binds 30S ribosomal subunits, but not 50S ribosomal subunits or 70S ribosomes.

It is found in the cytoplasm. Functionally, one of several proteins that assist in the late maturation steps of the functional core of the 30S ribosomal subunit. Associates with free 30S ribosomal subunits (but not with 30S subunits that are part of 70S ribosomes or polysomes). Required for efficient processing of 16S rRNA. May interact with the 5'-terminal helix region of 16S rRNA. In Dechloromonas aromatica (strain RCB), this protein is Ribosome-binding factor A.